A 289-amino-acid chain; its full sequence is Polyamine aminopropyltransferase (289 aa).

Residues 5–245 form the PABS domain; sequence PGPIVLVEPL…YAVNYILGSL (241 aa). Residue glutamine 36 coordinates S-methyl-5'-thioadenosine. Spermidine-binding residues include histidine 67 and glutamate 91. S-methyl-5'-thioadenosine-binding positions include aspartate 111 and 143-144; that span reads DG. The active-site Proton acceptor is aspartate 164.

This sequence belongs to the spermidine/spermine synthase family. In terms of assembly, homodimer or homotetramer.

It localises to the cytoplasm. The catalysed reaction is S-adenosyl 3-(methylsulfanyl)propylamine + putrescine = S-methyl-5'-thioadenosine + spermidine + H(+). It participates in amine and polyamine biosynthesis; spermidine biosynthesis; spermidine from putrescine: step 1/1. Functionally, catalyzes the irreversible transfer of a propylamine group from the amino donor S-adenosylmethioninamine (decarboxy-AdoMet) to putrescine (1,4-diaminobutane) to yield spermidine. In Pyrobaculum arsenaticum (strain DSM 13514 / JCM 11321 / PZ6), this protein is Polyamine aminopropyltransferase.